Reading from the N-terminus, the 406-residue chain is Protein PHYTOCHROME KINASE SUBSTRATE 4 (406 aa).

Residues 106–119 (SWNSQTGLLSNKNR) show a composition bias toward polar residues. The interval 106 to 133 (SWNSQTGLLSNKNRQGSDRDGRRSSKKG) is disordered.

The protein belongs to the PKS family. As to quaternary structure, interacts in vitro with PHYA and PHYB. As to expression, expressed in the hypocotyl elongation zone. Not found in the root elongation zone.

Its function is as follows. Modulates phytochrome-mediated control of hypocotyl growth orientation. Involved in PHYA and PHYB signaling. Acts as an inhibitor of asymmetric growth. Not involved in the control of leaf flattening. The polypeptide is Protein PHYTOCHROME KINASE SUBSTRATE 4 (PKS4) (Arabidopsis thaliana (Mouse-ear cress)).